A 505-amino-acid polypeptide reads, in one-letter code: Forkhead box protein O4 (505 aa).

Residues 1 to 10 (MDPGNENSAT) are compositionally biased toward polar residues. 2 disordered regions span residues 1 to 100 (MDPG…RRNA) and 176 to 246 (SWWM…CSRN). A Phosphothreonine; by PKB/AKT1 modification is found at Thr32. Basic and acidic residues predominate over residues 54–64 (LGEKVHTEGRS). Positions 100-188 (AWGNQSYAEL…MLNPEGGKSG (89 aa)) form a DNA-binding region, fork-head. A Phosphoserine; by PKB/AKT1 modification is found at Ser197. Residues 205-216 (LRGRSKAPKKKP) are compositionally biased toward basic residues. A Phosphoserine; by PKB/AKT1 modification is found at Ser262.

Interacts with CREBBP/CBP, CTNNB1, MYOCD, SIRT1, SRF and YWHAZ. Acetylated by CREBBP/CBP and deacetylated by SIRT1. Binding of YWHAZ inhibits DNA-binding. Interacts with USP7; the interaction is enhanced in presence of hydrogen peroxide and occurs independently of TP53. Interacts with NLK, and this inhibits monoubiquitination and transcriptional activity. Interacts with FOXK1; the interaction inhibits MEF2C transactivation activity. In terms of processing, acetylation by CREBBP/CBP, which is induced by peroxidase stress, inhibits transcriptional activity. Deacetylation by SIRT1 is NAD-dependent and stimulates transcriptional activity. Phosphorylation by PKB/AKT1 inhibits transcriptional activity and is responsible for cytoplasmic localization. May be phosphorylated at multiple sites by NLK. Post-translationally, monoubiquitinated; monoubiquitination is induced by oxidative stress and reduced by deacetylase inhibitors; results in its relocalization to the nucleus and its increased transcriptional activity. Deubiquitinated by USP7; deubiquitination is induced by oxidative stress; enhances its interaction with USP7 and consequently, deubiquitination; increases its translocation to the cytoplasm and inhibits its transcriptional activity. Hydrogene-peroxide-induced ubiquitination and USP7-mediated deubiquitination have no major effect on its protein stability. Heart, brain, placenta, lung, liver, skeletal muscle, kidney and pancreas. Isoform zeta is most abundant in the liver, kidney, and pancreas.

It is found in the cytoplasm. The protein localises to the nucleus. Functionally, transcription factor involved in the regulation of the insulin signaling pathway. Binds to insulin-response elements (IREs) and can activate transcription of IGFBP1. Down-regulates expression of HIF1A and suppresses hypoxia-induced transcriptional activation of HIF1A-modulated genes. Also involved in negative regulation of the cell cycle. Involved in increased proteasome activity in embryonic stem cells (ESCs) by activating expression of PSMD11 in ESCs, leading to enhanced assembly of the 26S proteasome, followed by higher proteasome activity. In Homo sapiens (Human), this protein is Forkhead box protein O4 (FOXO4).